The primary structure comprises 316 residues: MADKLTQLKALTTVVADTGDIEAIKRYQPIDATTNPSLVLKASEIPEYAALIEDAISWAKSQSQDKAQQIIDAGDKLAVNIGLEVLKIVPGRISTEVDARLSFDTEASIAKARKLIRLYNEAGIANDRILIKLASTWEGIRAAEVLEKEGIQCNLTLLFSFAQARACAEAGAFLISPFVGRILDWYKAKHNRDYTPSEDPGVVSVTAIYDYYKQHDYPTVVMGASFRNTGEILELAGCDRLTIGLPLLEELSKTEGAVVRKLNYTGERKAKPTPMSEAEFRWELNQDAMAHEKLGEGIRMFAVDQGKLETMLASRL.

Lys-132 functions as the Schiff-base intermediate with substrate in the catalytic mechanism.

Belongs to the transaldolase family. Type 1 subfamily. As to quaternary structure, homodimer.

The protein localises to the cytoplasm. The enzyme catalyses D-sedoheptulose 7-phosphate + D-glyceraldehyde 3-phosphate = D-erythrose 4-phosphate + beta-D-fructose 6-phosphate. The protein operates within carbohydrate degradation; pentose phosphate pathway; D-glyceraldehyde 3-phosphate and beta-D-fructose 6-phosphate from D-ribose 5-phosphate and D-xylulose 5-phosphate (non-oxidative stage): step 2/3. Transaldolase is important for the balance of metabolites in the pentose-phosphate pathway. This chain is Transaldolase, found in Aeromonas salmonicida (strain A449).